Here is a 118-residue protein sequence, read N- to C-terminus: Large ribosomal subunit protein bL20 (118 aa).

It belongs to the bacterial ribosomal protein bL20 family.

Its function is as follows. Binds directly to 23S ribosomal RNA and is necessary for the in vitro assembly process of the 50S ribosomal subunit. It is not involved in the protein synthesizing functions of that subunit. This chain is Large ribosomal subunit protein bL20, found in Buchnera aphidicola subsp. Acyrthosiphon pisum (strain 5A).